The following is a 424-amino-acid chain: Serine--tRNA ligase (424 aa).

Residue 229 to 231 (TAE) participates in L-serine binding. 260–262 (RRE) is a binding site for ATP. Glu-283 provides a ligand contact to L-serine. Residue 347 to 350 (EVSS) participates in ATP binding. Ser-383 serves as a coordination point for L-serine.

The protein belongs to the class-II aminoacyl-tRNA synthetase family. Type-1 seryl-tRNA synthetase subfamily. Homodimer. The tRNA molecule binds across the dimer.

The protein resides in the cytoplasm. The enzyme catalyses tRNA(Ser) + L-serine + ATP = L-seryl-tRNA(Ser) + AMP + diphosphate + H(+). It carries out the reaction tRNA(Sec) + L-serine + ATP = L-seryl-tRNA(Sec) + AMP + diphosphate + H(+). The protein operates within aminoacyl-tRNA biosynthesis; selenocysteinyl-tRNA(Sec) biosynthesis; L-seryl-tRNA(Sec) from L-serine and tRNA(Sec): step 1/1. Catalyzes the attachment of serine to tRNA(Ser). Is also able to aminoacylate tRNA(Sec) with serine, to form the misacylated tRNA L-seryl-tRNA(Sec), which will be further converted into selenocysteinyl-tRNA(Sec). The polypeptide is Serine--tRNA ligase (Roseiflexus sp. (strain RS-1)).